A 323-amino-acid polypeptide reads, in one-letter code: D-alanine--D-alanine ligase (323 aa).

The ATP-grasp domain maps to 102-300; the sequence is KQIFRAEGIP…FTELVERMLQ (199 aa). ATP is bound at residue 130-185; that stretch reads VARLGSPLVVKPSNSGSTVGISLARDEVSLAQGLALASSVSSRVFLERYIPGKEIT. 3 residues coordinate Mg(2+): Asp-254, Glu-267, and Asn-269.

Belongs to the D-alanine--D-alanine ligase family. It depends on Mg(2+) as a cofactor. Mn(2+) is required as a cofactor.

It is found in the cytoplasm. It catalyses the reaction 2 D-alanine + ATP = D-alanyl-D-alanine + ADP + phosphate + H(+). The protein operates within cell wall biogenesis; peptidoglycan biosynthesis. Cell wall formation. The sequence is that of D-alanine--D-alanine ligase from Synechococcus sp. (strain JA-3-3Ab) (Cyanobacteria bacterium Yellowstone A-Prime).